The chain runs to 193 residues: Potassium-transporting ATPase KdpC subunit (193 aa).

A helical transmembrane segment spans residues 7–27 (PLVVLFVVLTAVTGLAYPAVM).

It belongs to the KdpC family. As to quaternary structure, the system is composed of three essential subunits: KdpA, KdpB and KdpC.

The protein resides in the cell inner membrane. Part of the high-affinity ATP-driven potassium transport (or Kdp) system, which catalyzes the hydrolysis of ATP coupled with the electrogenic transport of potassium into the cytoplasm. This subunit acts as a catalytic chaperone that increases the ATP-binding affinity of the ATP-hydrolyzing subunit KdpB by the formation of a transient KdpB/KdpC/ATP ternary complex. The polypeptide is Potassium-transporting ATPase KdpC subunit (Burkholderia orbicola (strain MC0-3)).